The chain runs to 282 residues: Elongation factor Ts (282 aa).

Residues 80–83 are involved in Mg(2+) ion dislocation from EF-Tu; sequence TDFV.

It belongs to the EF-Ts family.

It is found in the cytoplasm. Its function is as follows. Associates with the EF-Tu.GDP complex and induces the exchange of GDP to GTP. It remains bound to the aminoacyl-tRNA.EF-Tu.GTP complex up to the GTP hydrolysis stage on the ribosome. The sequence is that of Elongation factor Ts (tsf) from Chlamydia pneumoniae (Chlamydophila pneumoniae).